A 333-amino-acid chain; its full sequence is MRNVFRTARLTRSARAIVKTLLIAIATVTFYFTSDLALPQSAAAYPFWAQQTYPETPREPTGRIVCANCHLAAKVTEVEVPQSVLPDTVFKAIVKIPYDLSAQQVGADGSKVGLNVGAVLMLPEGFKIAPEDRISEELKEEIGDTAFQPYSEDKENVVIVGPLPGEQYQEIIFPVLSPNPATDKNIHFGKYSVHVGGNRGRGQVYPTGEKSNNSVYNASATGTITKIAKEEDADGNVKYLVNIQPESGDVVVDTVPLGPDLIVSEGQAVKTGDALTNNPNVGGFGQIDAEIVLQDSSRVKWMIAFVALVMLAQVMLVLKKKQVEKVQAAEMNF.

A signal peptide spans 1-16 (MRNVFRTARLTRSARA). A helical membrane pass occupies residues 17–36 (IVKTLLIAIATVTFYFTSDL). The heme site is built by Tyr-45, Cys-66, Cys-69, and His-70. A helical membrane pass occupies residues 299-319 (VKWMIAFVALVMLAQVMLVLK).

It belongs to the cytochrome f family. As to quaternary structure, the 4 large subunits of the cytochrome b6-f complex are cytochrome b6, subunit IV (17 kDa polypeptide, PetD), cytochrome f and the Rieske protein, while the 4 small subunits are PetG, PetL, PetM and PetN. The complex functions as a dimer. It depends on heme as a cofactor.

It localises to the cellular thylakoid membrane. Component of the cytochrome b6-f complex, which mediates electron transfer between photosystem II (PSII) and photosystem I (PSI), cyclic electron flow around PSI, and state transitions. The sequence is that of Cytochrome f from Nostoc punctiforme (strain ATCC 29133 / PCC 73102).